Consider the following 394-residue polypeptide: MAKEVFQRTKPHMNVGTIGHVDHGKTTLTAAISIYCSKVNKDAKALKYEDIDNAPEEKARGITINARHIEYETAGMHYAHVDCPGHADYIKNMITGAAQMDAAVLLVAADSGAEPQTKEHLLLAQRMGINKIIVFLNKLDLADPELVELVEVEVLELVEKYGFPGDTPIVKGSAFGAMSNPDDPEATKCIKELLETMDNYFDLPQRDIDKPFLLAVEDVFSISGRGTVATGRIERGVIKVGQEVEIVGIRETRKTTVTGVEMFQKILEQGQAGDNVGLLLRGVDKKDIERGQVIAAIGTITPHKKFKASIYCLTKEEGGRHKPFFSGYRPQFFFRTTDVTGMVSLEGKEMVMPGDNVDIVVELISSIAMDKNVEFAVREGGRTVASGRILEILE.

The region spanning 10–205 is the tr-type G domain; the sequence is KPHMNVGTIG…TMDNYFDLPQ (196 aa). Residues 19–26 are G1; that stretch reads GHVDHGKT. 19 to 26 contacts GTP; the sequence is GHVDHGKT. Thr-26 is a binding site for Mg(2+). Positions 61–65 are G2; the sequence is GITIN. Residues 82–85 are G3; that stretch reads DCPG. GTP is bound by residues 82–86 and 137–140; these read DCPGH and NKLD. Residues 137 to 140 are G4; it reads NKLD. The interval 173–175 is G5; the sequence is SAF.

It belongs to the TRAFAC class translation factor GTPase superfamily. Classic translation factor GTPase family. EF-Tu/EF-1A subfamily. In terms of assembly, monomer.

The protein localises to the cytoplasm. The enzyme catalyses GTP + H2O = GDP + phosphate + H(+). GTP hydrolase that promotes the GTP-dependent binding of aminoacyl-tRNA to the A-site of ribosomes during protein biosynthesis. In Borrelia turicatae (strain 91E135), this protein is Elongation factor Tu.